We begin with the raw amino-acid sequence, 366 residues long: Outer membrane protein IIIA (366 aa).

The first 22 residues, 1–22 (MNIRMVLLASAAAFAASTPVLA), serve as a signal peptide directing secretion.

It belongs to the alphaproteobacteria porin family. In terms of assembly, forms calcium-stabilized oligomers. In terms of processing, attached covalently to peptidoglycan.

The protein resides in the cell outer membrane. May act as an outer membrane pore. This Rhizobium leguminosarum bv. viciae protein is Outer membrane protein IIIA (ropA).